The chain runs to 729 residues: Bromo and FHA domain-containing protein DDB_G0267958 (729 aa).

The segment covering Leu-46–Thr-79 has biased composition (low complexity). The interval Leu-46–Ala-83 is disordered. Positions Leu-112 to Phe-167 constitute an FHA domain. Composition is skewed to low complexity over residues Ile-208 to Ile-221, Pro-229 to Thr-275, and Pro-283 to Lys-306. Disordered stretches follow at residues Ile-208 to Lys-361 and Ser-403 to Pro-442. The segment covering Asp-310–Val-341 has biased composition (acidic residues). Residues Asp-315–Lys-352 are a coiled coil. Residues Pro-406–Lys-431 are compositionally biased toward low complexity. Residues Ser-498 to Ser-617 form the Bromo domain. Residues Ser-659 to Asp-718 adopt a coiled-coil conformation. A disordered region spans residues Ser-659 to Gln-729. The span at Gln-668–Gln-729 shows a compositional bias: acidic residues.

This is Bromo and FHA domain-containing protein DDB_G0267958 from Dictyostelium discoideum (Social amoeba).